Reading from the N-terminus, the 407-residue chain is Arginine deiminase (407 aa).

Cys397 serves as the catalytic Amidino-cysteine intermediate.

This sequence belongs to the arginine deiminase family.

The protein localises to the cytoplasm. The enzyme catalyses L-arginine + H2O = L-citrulline + NH4(+). It functions in the pathway amino-acid degradation; L-arginine degradation via ADI pathway; carbamoyl phosphate from L-arginine: step 1/2. This Vibrio parahaemolyticus serotype O3:K6 (strain RIMD 2210633) protein is Arginine deiminase.